We begin with the raw amino-acid sequence, 760 residues long: General transcription and DNA repair factor IIH helicase subunit XPD (760 aa).

One can recognise a Helicase ATP-binding domain in the interval 7-283 (GLLVYFPYDY…KETDEQRLRD (277 aa)). ATP is bound at residue 42–49 (MPSGTGKT). Positions 116, 134, 155, and 190 each coordinate [4Fe-4S] cluster. Positions 234–237 (DEAH) match the DEAH box motif. A mediates interaction with MMS19 region spans residues 438 to 637 (MDASLAIKPV…TQSRILKARL (200 aa)).

This sequence belongs to the helicase family. RAD3/XPD subfamily. In terms of assembly, component of the 7-subunit TFIIH core complex composed of XPB/ERCC3, XPD/ERCC2, GTF2H1, GTF2H2, GTF2H3, GTF2H4 and GTF2H5, which is active in NER. The core complex associates with the 3-subunit CDK-activating kinase (CAK) module composed of CCNH/cyclin H, CDK7 and MNAT1 to form the 10-subunit holoenzyme (holo-TFIIH) active in transcription. The interaction with GTF2H2 results in the stimulation of the 5'--&gt;3' helicase activity. Component of the MMXD complex, which includes CIAO1, ERCC2, CIAO2B, MMS19 and SLC25A5. Interacts with CIAO1 and CIAO2B; the interaction WITH CIAO2B is direct. Interacts with ATF7IP. Interacts directly with MMS19. Part of TBP-based Pol II pre-initiation complex (PIC), in which Pol II core assembles with general transcription factors and other specific initiation factors including GTF2E1, GTF2E2, GTF2F1, GTF2F2, TCEA1, ERCC2, ERCC3, GTF2H2, GTF2H3, GTF2H4, GTF2H5, GTF2A1, GTF2A2, GTF2B and TBP; this large multi-subunit PIC complex mediates DNA unwinding and targets Pol II core to the transcription start site where the first phosphodiester bond forms. It depends on Mg(2+) as a cofactor. [4Fe-4S] cluster serves as cofactor. In terms of processing, ISGylated.

Its subcellular location is the nucleus. It localises to the cytoplasm. The protein localises to the cytoskeleton. The protein resides in the spindle. The catalysed reaction is Couples ATP hydrolysis with the unwinding of duplex DNA at the replication fork by translocating in the 5'-3' direction. This creates two antiparallel DNA single strands (ssDNA). The leading ssDNA polymer is the template for DNA polymerase III holoenzyme which synthesizes a continuous strand.. The enzyme catalyses ATP + H2O = ADP + phosphate + H(+). Functionally, ATP-dependent 5'-3' DNA helicase, component of the general transcription and DNA repair factor IIH (TFIIH) core complex, which is involved in general and transcription-coupled nucleotide excision repair (NER) of damaged DNA and, when complexed to CDK-activating kinase (CAK), involved in transcription by RNA polymerase II. In NER, TFIIH acts by opening DNA around the lesion to allow the excision of the damaged oligonucleotide and its replacement by a new DNA fragment. The ATP-dependent helicase activity of XPD/ERCC2 is required for DNA opening. In transcription, TFIIH has an essential role in transcription initiation. When the pre-initiation complex (PIC) has been established, TFIIH is required for promoter opening and promoter escape. Phosphorylation of the C-terminal tail (CTD) of the largest subunit of RNA polymerase II by the kinase module CAK controls the initiation of transcription. XPD/ERCC2 acts by forming a bridge between CAK and the core-TFIIH complex. Involved in the regulation of vitamin-D receptor activity. As part of the mitotic spindle-associated MMXD complex it plays a role in chromosome segregation. Might have a role in aging process and could play a causative role in the generation of skin cancers. The polypeptide is General transcription and DNA repair factor IIH helicase subunit XPD (Ercc2) (Mus musculus (Mouse)).